The primary structure comprises 256 residues: Follistatin-related protein 3 (256 aa).

A signal peptide spans 1–23; the sequence is MRPGALWPLLWGALVWAVGSVGA. The region spanning 34–105 is the TB domain; that stretch reads GVCWLQQGKE…SCDGVECGPG (72 aa). 8 cysteine pairs are disulfide-bonded: cysteine 36/cysteine 59, cysteine 46/cysteine 90, cysteine 60/cysteine 93, cysteine 97/cysteine 108, cysteine 102/cysteine 117, cysteine 119/cysteine 151, cysteine 123/cysteine 144, and cysteine 133/cysteine 165. Asparagine 71 carries an N-linked (GlcNAc...) asparagine glycan. In terms of domain architecture, Follistatin-like 1 spans 97-117; sequence CDGVECGPGKACRMLGGRPHC. 2 consecutive Kazal-like domains span residues 111-167 and 187-243; these read LGGR…RCQK and SAHC…ICTG. The region spanning 168–191 is the Follistatin-like 2 domain; it reads SCAQVVCPRPQSCLVDQTGSAHCV. Disulfide bonds link cysteine 193-cysteine 227, cysteine 198-cysteine 220, and cysteine 209-cysteine 241. Residue asparagine 213 is glycosylated (N-linked (GlcNAc...) asparagine).

In terms of assembly, interacts with INHBA and INHBB. Interacts with FN1. Interacts with ADAM12. Interacts with MLLT10; the interaction enhances MLLT10 in vitro transcriptional activity and self-association. Interacts with MSTN.

It localises to the secreted. The protein localises to the nucleus. Functionally, the secreted form is a binding and antagonizing protein for members of the TGF-beta family, such as activin, BMP2 and MSTN. Inhibits activin A-, activin B-, BMP2- and MSDT-induced cellular signaling; more effective on activin A than on activin B. Involved in bone formation; inhibits osteoclast differentiation. Involved in hematopoiesis; involved in differentiation of hemopoietic progenitor cells, increases hematopoietic cell adhesion to fibronectin and seems to contribute to the adhesion of hematopoietic precursor cells to the bone marrow stroma. The nuclear form is probably involved in transcriptional regulation via interaction with MLLT10. The sequence is that of Follistatin-related protein 3 (Fstl3) from Rattus norvegicus (Rat).